Reading from the N-terminus, the 236-residue chain is Bidirectional sugar transporter SWEET2 (236 aa).

Over 1 to 15 (MDVFAFNASLSMCKD) the chain is Extracellular. The N-linked (GlcNAc...) asparagine glycan is linked to Asn-7. Residues 16-36 (VAGIAGNIFAFGLFVSPMPTF) traverse the membrane as a helical segment. The 86-residue stretch at 18–103 (GIAGNIFAFG…ILFIMHTDKK (86 aa)) folds into the MtN3/slv 1 domain. The Cytoplasmic portion of the chain corresponds to 37–50 (RRIMRNKSTEQFSG). The helical transmembrane segment at 51-71 (LPYIYALLNCLICLWYGTPFI) threads the bilayer. The Extracellular segment spans residues 72 to 76 (SHSNA). The chain crosses the membrane as a helical span at residues 77–97 (MLMTVNSVGATFQLCYIILFI). Topologically, residues 98-108 (MHTDKKNKMKM) are cytoplasmic. A helical membrane pass occupies residues 109 to 129 (LGLLFVVFAVVGVIVAGSLQI). Residues 130 to 137 (PDQLTRWY) lie on the Extracellular side of the membrane. A helical transmembrane segment spans residues 138-158 (FVGFLSCGSLVSMFASPLFVI). Positions 138–221 (FVGFLSCGSL…LALYCYYHRN (84 aa)) constitute a MtN3/slv 2 domain. Topologically, residues 159–170 (NLVIRTKSVEFM) are cytoplasmic. The helical transmembrane segment at 171–191 (PFYLSLSTFLMSASFLLYGLF) threads the bilayer. Residues 192 to 194 (NSD) are Extracellular-facing. The helical transmembrane segment at 195–215 (AFVYTPNGIGTILGIVQLALY) threads the bilayer. At 216–236 (CYYHRNSIEEETKEPLIVSYV) the chain is on the cytoplasmic side.

This sequence belongs to the SWEET sugar transporter family. Forms heterooligomers with SWEET17.

The protein resides in the cell membrane. Functionally, mediates both low-affinity uptake and efflux of sugar across the plasma membrane. This chain is Bidirectional sugar transporter SWEET2, found in Arabidopsis thaliana (Mouse-ear cress).